Consider the following 902-residue polypeptide: HTH-type transcriptional regulator MalT (902 aa).

S39–T46 is an ATP binding site. The HTH luxR-type domain occupies E830–L895. A DNA-binding region (H-T-H motif) is located at residues N854 to R873.

This sequence belongs to the MalT family. Monomer in solution. Oligomerizes to an active state in the presence of the positive effectors ATP and maltotriose.

With respect to regulation, activated by ATP and maltotriose, which are both required for DNA binding. Its function is as follows. Positively regulates the transcription of the maltose regulon whose gene products are responsible for uptake and catabolism of malto-oligosaccharides. Specifically binds to the promoter region of its target genes, recognizing a short DNA motif called the MalT box. This Salmonella dublin (strain CT_02021853) protein is HTH-type transcriptional regulator MalT.